The following is a 718-amino-acid chain: MARYELVKRSVALITLTNPPVNALSSAVRHAISKTMERALSDPKVTAVVICGENGRFCGGADIREFAGPLRGPPLVPLLDAIEAGEKPVVAAIEGVALGGGFELALVCHYRIAHYKARLGLPEVTLGILPAAGGTQRLPRLIGIPAALELITTGRHVSAQEALKLGMVDQVTEQNTCEVALEFALKAVGKPLSSRRLSMLTTPCPPGLDGIFEAATMQVQKKARGVMAPLACVQAVRAATLPYSEGIKREGELMATLFSSGQAQALQYSFFAQRTAEKWTLPSGAQWNNSKPREIQSAAVIGLGTMGRGIVVSLARVGISVIAVESEKKLLETGRQMVIGMLERDAKRRGVSASLNLLKFSLSLQDLKDVDLVIEAVFEDMALKKQIFRELSRVCRPATLLCSNTSGLDVDALADVTDRPQLVAGMHFFSPAHVMKLLEVVCGPRSSKEAIATAMSLGKRMGKVSVAVGNCPGFVGNRMLMPYLEQATFLLEEGATPQQIDKALEDFGFAMGVFRMSDLAGLDVGWRVRKESGLTGPDVDPKDPPRRRQGRKYCPIPDMVCQQGRFGQKTGRGWYMYDKPGDTNAKPDPLIQNLLETYRSRYGIQPRKITDQEIIERCLFALANEGFRILKDKIAGQPEDIDVIYLFGYGFPRHRGGPMFYASMVGLERVLERLEYYHHALPDVPHLEPSPLLKKLVARGSPPIQKWREHIKSMHSHL.

An enoyl-CoA hydratase / isomerase region spans residues 2 to 280 (ARYELVKRSV…FAQRTAEKWT (279 aa)). Glycine 100 contacts substrate. The 3-hydroxyacyl-CoA dehydrogenase stretch occupies residues 281–567 (LPSGAQWNNS…DMVCQQGRFG (287 aa)). The Microbody targeting signal motif lies at 716–718 (SHL).

It in the N-terminal section; belongs to the enoyl-CoA hydratase/isomerase family. This sequence in the C-terminal section; belongs to the 3-hydroxyacyl-CoA dehydrogenase family. In terms of assembly, monomer.

The protein localises to the peroxisome. The catalysed reaction is a (3S)-3-hydroxyacyl-CoA = a (2E)-enoyl-CoA + H2O. It carries out the reaction a 4-saturated-(3S)-3-hydroxyacyl-CoA = a (3E)-enoyl-CoA + H2O. It catalyses the reaction a (3Z)-enoyl-CoA = a 4-saturated (2E)-enoyl-CoA. The enzyme catalyses a (3E)-enoyl-CoA = a 4-saturated (2E)-enoyl-CoA. The catalysed reaction is a (3S)-3-hydroxyacyl-CoA + NAD(+) = a 3-oxoacyl-CoA + NADH + H(+). It carries out the reaction (2S,3S)-3-hydroxy-2-methylbutanoyl-CoA = (2E)-2-methylbut-2-enoyl-CoA + H2O. It catalyses the reaction (3S)-hydroxyhexadecanoyl-CoA + NAD(+) = 3-oxohexadecanoyl-CoA + NADH + H(+). The enzyme catalyses (3S)-hydroxyhexadecanoyl-CoA = (2E)-hexadecenoyl-CoA + H2O. The catalysed reaction is (2E)-hexadecenedioyl-CoA + H2O = (3S)-hydroxyhexadecanedioyl-CoA. It carries out the reaction (3S)-hydroxyhexadecanedioyl-CoA + NAD(+) = 3-oxohexadecanedioyl-CoA + NADH + H(+). It catalyses the reaction (3E,5Z)-tetradecadienoyl-CoA = (2E,5Z)-tetradecadienoyl-CoA. The enzyme catalyses (3E,5Z)-octadienoyl-CoA = (2E,5Z)-octadienoyl-CoA. The catalysed reaction is (3S)-hydroxydecanoyl-CoA + NAD(+) = 3-oxodecanoyl-CoA + NADH + H(+). It carries out the reaction (3E)-decenoyl-CoA = (2E)-decenoyl-CoA. It catalyses the reaction (3Z)-hexenoyl-CoA = (2E)-hexenoyl-CoA. The enzyme catalyses (3E)-hexenoyl-CoA = (2E)-hexenoyl-CoA. The catalysed reaction is (3S)-hydroxydecanoyl-CoA = (2E)-decenoyl-CoA + H2O. It carries out the reaction (3S)-hydroxyhexanoyl-CoA = (2E)-hexenoyl-CoA + H2O. Its pathway is lipid metabolism; fatty acid beta-oxidation. Its function is as follows. Peroxisomal trifunctional enzyme possessing 2-enoyl-CoA hydratase, 3-hydroxyacyl-CoA dehydrogenase, and delta 3, delta 2-enoyl-CoA isomerase activities. Catalyzes two of the four reactions of the long straight chain fatty acids peroxisomal beta-oxidation pathway. Can also use branched-chain fatty acids such as 2-methyl-2E-butenoyl-CoA as a substrate, which is hydrated into (2S,3S)-3-hydroxy-2-methylbutanoyl-CoA. Optimal isomerase for 2,5 double bonds into 3,5 form isomerization in a range of enoyl-CoA species. Also able to isomerize both 3-cis and 3-trans double bonds into the 2-trans form in a range of enoyl-CoA species. Regulates the amount of medium-chain dicarboxylic fatty acids which are essential regulators of all fatty acid oxidation pathways. Also involved in the degradation of long-chain dicarboxylic acids through peroxisomal beta-oxidation. This is Peroxisomal bifunctional enzyme (ehhadh) from Danio rerio (Zebrafish).